We begin with the raw amino-acid sequence, 152 residues long: MAKRVKVVLNETINKLGFTGDLVEVAPGYARNYLIPKGLGVVATPGILRQVEQRRLKELERLKAEKDAAEARKVALETIGRFVIKKQVGEAEAIFGTVTTQEVADAVEAATNQSLDRRGISLPDIHKTGFYQAQIKLHPEVIATVEVQVAPL.

It belongs to the bacterial ribosomal protein bL9 family.

Binds to the 23S rRNA. The protein is Large ribosomal subunit protein bL9 of Synechocystis sp. (strain ATCC 27184 / PCC 6803 / Kazusa).